A 579-amino-acid chain; its full sequence is CTP synthase (579 aa).

The interval 1–281 is amidoligase domain; that stretch reads MPALRKHPQT…DAYVVRRLNL (281 aa). Serine 23 is a CTP binding site. Serine 23 is a UTP binding site. ATP contacts are provided by residues 24–29 and aspartate 81; that span reads SLGKGL. The Mg(2+) site is built by aspartate 81 and glutamate 155. CTP is bound by residues 162-164, 202-207, and lysine 238; these read DIE and KTKPTQ. UTP contacts are provided by residues 202-207 and lysine 238; that span reads KTKPTQ. The 249-residue stretch at 306-554 folds into the Glutamine amidotransferase type-1 domain; sequence RIALVGKYID…IGAALDYKAA (249 aa). Residue glycine 369 participates in L-glutamine binding. Residue cysteine 396 is the Nucleophile; for glutamine hydrolysis of the active site. L-glutamine is bound by residues 397 to 400, glutamate 419, and arginine 480; that span reads LGLQ. Residues histidine 527 and glutamate 529 contribute to the active site.

The protein belongs to the CTP synthase family. In terms of assembly, homotetramer.

It catalyses the reaction UTP + L-glutamine + ATP + H2O = CTP + L-glutamate + ADP + phosphate + 2 H(+). The catalysed reaction is L-glutamine + H2O = L-glutamate + NH4(+). It carries out the reaction UTP + NH4(+) + ATP = CTP + ADP + phosphate + 2 H(+). It functions in the pathway pyrimidine metabolism; CTP biosynthesis via de novo pathway; CTP from UDP: step 2/2. Its activity is regulated as follows. Allosterically activated by GTP, when glutamine is the substrate; GTP has no effect on the reaction when ammonia is the substrate. The allosteric effector GTP functions by stabilizing the protein conformation that binds the tetrahedral intermediate(s) formed during glutamine hydrolysis. Inhibited by the product CTP, via allosteric rather than competitive inhibition. Its function is as follows. Catalyzes the ATP-dependent amination of UTP to CTP with either L-glutamine or ammonia as the source of nitrogen. Regulates intracellular CTP levels through interactions with the four ribonucleotide triphosphates. This chain is CTP synthase, found in Mycobacterium sp. (strain JLS).